We begin with the raw amino-acid sequence, 186 residues long: Ribosome-recycling factor (186 aa).

The protein belongs to the RRF family.

The protein localises to the cytoplasm. In terms of biological role, responsible for the release of ribosomes from messenger RNA at the termination of protein biosynthesis. May increase the efficiency of translation by recycling ribosomes from one round of translation to another. This Polynucleobacter asymbioticus (strain DSM 18221 / CIP 109841 / QLW-P1DMWA-1) (Polynucleobacter necessarius subsp. asymbioticus) protein is Ribosome-recycling factor.